Reading from the N-terminus, the 224-residue chain is Orotate phosphoribosyltransferase (224 aa).

K29 serves as a coordination point for 5-phospho-alpha-D-ribose 1-diphosphate. 37–38 (FF) contributes to the orotate binding site. 5-phospho-alpha-D-ribose 1-diphosphate-binding positions include 75 to 76 (YK), R105, K106, K109, H111, and 130 to 138 (DDVITAGTS). The orotate site is built by T134 and R162.

Belongs to the purine/pyrimidine phosphoribosyltransferase family. PyrE subfamily. As to quaternary structure, homodimer. Requires Mg(2+) as cofactor.

It catalyses the reaction orotidine 5'-phosphate + diphosphate = orotate + 5-phospho-alpha-D-ribose 1-diphosphate. It participates in pyrimidine metabolism; UMP biosynthesis via de novo pathway; UMP from orotate: step 1/2. Functionally, catalyzes the transfer of a ribosyl phosphate group from 5-phosphoribose 1-diphosphate to orotate, leading to the formation of orotidine monophosphate (OMP). The polypeptide is Orotate phosphoribosyltransferase (Bordetella bronchiseptica (strain ATCC BAA-588 / NCTC 13252 / RB50) (Alcaligenes bronchisepticus)).